The primary structure comprises 1208 residues: ATP-dependent DNA helicase Q4 (1208 aa).

2 disordered regions span residues 17–180 (AFRR…ASLS) and 201–333 (FLGA…AGKA). A Phosphoserine modification is found at Ser-27. Positions 36 to 47 (EETRALYREYRT) are enriched in basic and acidic residues. Positions 61-70 (SSESLPAAAE) are enriched in low complexity. Positions 86-100 (ATKSPQSTPGRSRQG) are enriched in polar residues. 2 positions are modified to phosphoserine: Ser-178 and Ser-180. The segment covering 273–283 (AQVQQESSQAG) has biased composition (polar residues). Positions 489–662 (VMRILSGIST…AQHLAVAEEP (174 aa)) constitute a Helicase ATP-binding domain. An ATP-binding site is contributed by 502 to 509 (LPTGAGKS). The DEAH box signature appears at 605–608 (DEAH). Residues 683-850 (DTDQALLTLL…AVKRLVQRVF (168 aa)) form the Helicase C-terminal domain. Zn(2+) contacts are provided by Cys-853 and Cys-855. Residues 860-888 (PPSEQEGAVGGERPVPKYPPQEAEQLSHQ) are disordered. Cys-897 and His-900 together coordinate Zn(2+). The segment at 1111 to 1130 (EEGQEPGGMEDAQGPEPGQA) is disordered. The tract at residues 1117 to 1208 (GGMEDAQGPE…ATEELLQVAR (92 aa)) is increases helicase activity about 5-fold (in a fragment starting at residue 427).

This sequence belongs to the helicase family. RecQ subfamily. As to quaternary structure, interacts with UBR1 and UBR2. Interacts with MCM10; this interaction regulates RECQL4 unwinding activity. Interacts (via residues 1-54) with TOPBP1. The cofactor is Zn(2+). As to expression, ubiquitously expressed, with highest levels in thymus and testis.

Its subcellular location is the cytoplasm. It localises to the nucleus. The catalysed reaction is Couples ATP hydrolysis with the unwinding of duplex DNA by translocating in the 3'-5' direction.. It carries out the reaction ATP + H2O = ADP + phosphate + H(+). An ATP-dependent DNA helicase which unwinds dsDNA with a 3'-overhang in a 3'-5' direction. Does not unwind more than 18 bp of dsDNA. May modulate chromosome segregation. The N-terminal domain (residues 1-54) binds DNA Y-shaped DNA better than ss- or dsDNA. The core helicase domain binds ssDNA. This Homo sapiens (Human) protein is ATP-dependent DNA helicase Q4 (RECQL4).